A 182-amino-acid polypeptide reads, in one-letter code: Probable RNA 2'-phosphotransferase (182 aa).

Belongs to the KptA/TPT1 family.

Its function is as follows. Removes the 2'-phosphate from RNA via an intermediate in which the phosphate is ADP-ribosylated by NAD followed by a presumed transesterification to release the RNA and generate ADP-ribose 1''-2''-cyclic phosphate (APPR&gt;P). May function as an ADP-ribosylase. The chain is Probable RNA 2'-phosphotransferase from Pseudomonas paraeruginosa (strain DSM 24068 / PA7) (Pseudomonas aeruginosa (strain PA7)).